Consider the following 216-residue polypeptide: Uracil-DNA glycosylase (216 aa).

The active-site Proton acceptor is Asp59.

This sequence belongs to the uracil-DNA glycosylase (UDG) superfamily. UNG family.

The protein resides in the cytoplasm. The enzyme catalyses Hydrolyzes single-stranded DNA or mismatched double-stranded DNA and polynucleotides, releasing free uracil.. Excises uracil residues from the DNA which can arise as a result of misincorporation of dUMP residues by DNA polymerase or due to deamination of cytosine. The chain is Uracil-DNA glycosylase from Idiomarina loihiensis (strain ATCC BAA-735 / DSM 15497 / L2-TR).